A 301-amino-acid chain; its full sequence is Possible hemolysin C (301 aa).

CBS domains lie at 79 to 141 (MVPR…NFRL) and 144 to 201 (LIRK…IDDE).

The protein belongs to the UPF0053 family. Hemolysin C subfamily.

The sequence is that of Possible hemolysin C (tlyC) from Rickettsia bellii (strain RML369-C).